A 235-amino-acid chain; its full sequence is Transmembrane protein 176A (235 aa).

S38 carries the post-translational modification Phosphoserine. The next 4 membrane-spanning stretches (helical) occupy residues 55–75 (VASW…GGFF), 86–106 (SGAA…AFIY), 113–133 (YWAL…IAAL), and 193–213 (AMLL…LWLY).

The protein belongs to the TMEM176 family. Interacts with MCOLN2.

Its subcellular location is the membrane. This is Transmembrane protein 176A (TMEM176A) from Homo sapiens (Human).